We begin with the raw amino-acid sequence, 363 residues long: 3-isopropylmalate dehydrogenase (363 aa).

78-91 lines the NAD(+) pocket; it reads GKKWDYLPIESRPE. The substrate site is built by arginine 99, arginine 109, arginine 138, and aspartate 227. The Mg(2+) site is built by aspartate 227, aspartate 251, and aspartate 255. 285–297 is an NAD(+) binding site; sequence GSAPDIEGKNIAN.

This sequence belongs to the isocitrate and isopropylmalate dehydrogenases family. LeuB type 1 subfamily. In terms of assembly, homodimer. Mg(2+) serves as cofactor. It depends on Mn(2+) as a cofactor.

The protein localises to the cytoplasm. It carries out the reaction (2R,3S)-3-isopropylmalate + NAD(+) = 4-methyl-2-oxopentanoate + CO2 + NADH. It functions in the pathway amino-acid biosynthesis; L-leucine biosynthesis; L-leucine from 3-methyl-2-oxobutanoate: step 3/4. Catalyzes the oxidation of 3-carboxy-2-hydroxy-4-methylpentanoate (3-isopropylmalate) to 3-carboxy-4-methyl-2-oxopentanoate. The product decarboxylates to 4-methyl-2 oxopentanoate. This Buchnera aphidicola subsp. Schizaphis graminum (strain Sg) protein is 3-isopropylmalate dehydrogenase.